The sequence spans 204 residues: Arginine exporter protein ArgO (204 aa).

6 consecutive transmembrane segments (helical) span residues 1-21 (MFAV…PLGP), 37-57 (LMVA…GIFG), 67-87 (LLLG…GWGA), 111-131 (IIAT…DTFV), 147-167 (WFAL…ALLA), and 179-199 (VQRV…LQLA).

The protein belongs to the LysE/ArgO transporter (TC 2.A.75) family.

The protein localises to the cell inner membrane. The catalysed reaction is L-arginine(in) = L-arginine(out). Its function is as follows. Involved in the export of arginine. Important to control the intracellular level of arginine and the correct balance between arginine and lysine. The sequence is that of Arginine exporter protein ArgO from Pectobacterium carotovorum subsp. carotovorum (strain PC1).